The following is a 199-amino-acid chain: Large ribosomal subunit protein uL4 (199 aa).

The protein belongs to the universal ribosomal protein uL4 family. Part of the 50S ribosomal subunit.

In terms of biological role, one of the primary rRNA binding proteins, this protein initially binds near the 5'-end of the 23S rRNA. It is important during the early stages of 50S assembly. It makes multiple contacts with different domains of the 23S rRNA in the assembled 50S subunit and ribosome. Forms part of the polypeptide exit tunnel. The protein is Large ribosomal subunit protein uL4 of Aquifex pyrophilus.